Here is a 734-residue protein sequence, read N- to C-terminus: Photosystem I P700 chlorophyll a apoprotein A2 (734 aa).

8 helical membrane passes run 46 to 69 (IFAS…FHVA), 135 to 158 (LYTG…LHLQ), 175 to 199 (LNHH…HVAI), 273 to 291 (MAHH…GHMY), 330 to 353 (LHFQ…QHMY), 369 to 395 (AALY…IFFI), 417 to 439 (AIIS…LYVH), and 517 to 535 (FLVH…LILV). [4Fe-4S] cluster is bound by residues Cys559 and Cys568. A run of 2 helical transmembrane segments spans residues 575–596 (AFYL…YWHW) and 643–665 (LSVW…MFLI). The chlorophyll a site is built by His654, Met662, and Tyr670. Phylloquinone is bound at residue Trp671. A helical transmembrane segment spans residues 707 to 727 (LVGLAHFSVGYIFTYAAFLIA).

It belongs to the PsaA/PsaB family. As to quaternary structure, the PsaA/B heterodimer binds the P700 chlorophyll special pair and subsequent electron acceptors. PSI consists of a core antenna complex that captures photons, and an electron transfer chain that converts photonic excitation into a charge separation. The eukaryotic PSI reaction center is composed of at least 11 subunits. P700 is a chlorophyll a/chlorophyll a' dimer, A0 is one or more chlorophyll a, A1 is one or both phylloquinones and FX is a shared 4Fe-4S iron-sulfur center. serves as cofactor.

It is found in the plastid. Its subcellular location is the chloroplast thylakoid membrane. It catalyses the reaction reduced [plastocyanin] + hnu + oxidized [2Fe-2S]-[ferredoxin] = oxidized [plastocyanin] + reduced [2Fe-2S]-[ferredoxin]. Functionally, psaA and PsaB bind P700, the primary electron donor of photosystem I (PSI), as well as the electron acceptors A0, A1 and FX. PSI is a plastocyanin-ferredoxin oxidoreductase, converting photonic excitation into a charge separation, which transfers an electron from the donor P700 chlorophyll pair to the spectroscopically characterized acceptors A0, A1, FX, FA and FB in turn. Oxidized P700 is reduced on the lumenal side of the thylakoid membrane by plastocyanin. The chain is Photosystem I P700 chlorophyll a apoprotein A2 from Lactuca sativa (Garden lettuce).